The chain runs to 225 residues: Cell division protein SepF (225 aa).

The interval Glu22 to Arg116 is disordered. 2 stretches are compositionally biased toward basic and acidic residues: residues Glu28–Ala54 and Arg77–Arg86.

Belongs to the SepF family. As to quaternary structure, homodimer. Interacts with FtsZ.

It localises to the cytoplasm. In terms of biological role, cell division protein that is part of the divisome complex and is recruited early to the Z-ring. Probably stimulates Z-ring formation, perhaps through the cross-linking of FtsZ protofilaments. Its function overlaps with FtsA. This Rhodococcus jostii (strain RHA1) protein is Cell division protein SepF.